A 160-amino-acid polypeptide reads, in one-letter code: Cytochrome b6-f complex subunit 4 (160 aa).

Transmembrane regions (helical) follow at residues 36-56, 95-115, and 131-151; these read LLYIFPVVIFGTIACNVGLAV, LLGVLLMAAVPAGLLTVPFLE, and TVFLIGTVVSIWLGIGAAMPI.

This sequence belongs to the cytochrome b family. PetD subfamily. In terms of assembly, the 4 large subunits of the cytochrome b6-f complex are cytochrome b6, subunit IV (17 kDa polypeptide, petD), cytochrome f and the Rieske protein, while the 4 small subunits are petG, petL, petM and petN. The complex functions as a dimer.

Its subcellular location is the plastid. The protein localises to the chloroplast thylakoid membrane. Its function is as follows. Component of the cytochrome b6-f complex, which mediates electron transfer between photosystem II (PSII) and photosystem I (PSI), cyclic electron flow around PSI, and state transitions. The chain is Cytochrome b6-f complex subunit 4 from Zygnema circumcarinatum (Green alga).